Reading from the N-terminus, the 208-residue chain is Large ribosomal subunit protein uL4 (208 aa).

Positions 49 to 78 are disordered; sequence HKAKTRAEVRGGGKKPFRQKGTGNARQGST. The span at 69–78 shows a compositional bias: polar residues; sequence GTGNARQGST.

Belongs to the universal ribosomal protein uL4 family. In terms of assembly, part of the 50S ribosomal subunit.

In terms of biological role, one of the primary rRNA binding proteins, this protein initially binds near the 5'-end of the 23S rRNA. It is important during the early stages of 50S assembly. It makes multiple contacts with different domains of the 23S rRNA in the assembled 50S subunit and ribosome. Its function is as follows. Forms part of the polypeptide exit tunnel. The sequence is that of Large ribosomal subunit protein uL4 from Chlorobaculum tepidum (strain ATCC 49652 / DSM 12025 / NBRC 103806 / TLS) (Chlorobium tepidum).